The chain runs to 245 residues: Tetraspanin-6 (245 aa).

Over 1–19 (MASPSRRLQTKPVITCFKS) the chain is Cytoplasmic. The chain crosses the membrane as a helical span at residues 20–40 (VLLIYTFIFWITGVILLAVGI). Topologically, residues 41–59 (WGKVSLENYFSLLNEKATN) are extracellular. Residues 60–80 (VPFVLIATGTVIILLGTFGCF) traverse the membrane as a helical segment. At 81–93 (ATCRASAWMLKLY) the chain is on the cytoplasmic side. A helical transmembrane segment spans residues 94-114 (AMFLTLIFLVELVAAIVGFVF). At 115 to 208 (RHEIKNSFKN…IKVMTIIESE (94 aa)) the chain is on the extracellular side. Residue N134 is glycosylated (N-linked (GlcNAc...) asparagine). Residues 209 to 229 (MGVVAGISFGVACFQLIGIFL) traverse the membrane as a helical segment. At 230-245 (AYCLSRAITNNQYEIV) the chain is on the cytoplasmic side.

It belongs to the tetraspanin (TM4SF) family.

Its subcellular location is the membrane. The sequence is that of Tetraspanin-6 (TSPAN6) from Pongo abelii (Sumatran orangutan).